The following is a 113-amino-acid chain: Venom protein 184 (113 aa).

A signal peptide spans 1 to 21 (MKTTLIFCILGIVIPTAVVSS).

In terms of processing, contains 3 disulfide bonds. In terms of tissue distribution, expressed by the venom gland.

The protein resides in the secreted. The chain is Venom protein 184 from Lychas mucronatus (Chinese swimming scorpion).